The primary structure comprises 495 residues: Aspartyl/glutamyl-tRNA(Asn/Gln) amidotransferase subunit B (495 aa).

It belongs to the GatB/GatE family. GatB subfamily. In terms of assembly, heterotrimer of A, B and C subunits.

It catalyses the reaction L-glutamyl-tRNA(Gln) + L-glutamine + ATP + H2O = L-glutaminyl-tRNA(Gln) + L-glutamate + ADP + phosphate + H(+). It carries out the reaction L-aspartyl-tRNA(Asn) + L-glutamine + ATP + H2O = L-asparaginyl-tRNA(Asn) + L-glutamate + ADP + phosphate + 2 H(+). Its function is as follows. Allows the formation of correctly charged Asn-tRNA(Asn) or Gln-tRNA(Gln) through the transamidation of misacylated Asp-tRNA(Asn) or Glu-tRNA(Gln) in organisms which lack either or both of asparaginyl-tRNA or glutaminyl-tRNA synthetases. The reaction takes place in the presence of glutamine and ATP through an activated phospho-Asp-tRNA(Asn) or phospho-Glu-tRNA(Gln). The sequence is that of Aspartyl/glutamyl-tRNA(Asn/Gln) amidotransferase subunit B from Methanosarcina acetivorans (strain ATCC 35395 / DSM 2834 / JCM 12185 / C2A).